A 260-amino-acid polypeptide reads, in one-letter code: Transcription factor BEE 1 (260 aa).

The interval 118-139 (ETGSLRRGKRLKKKKEEEDEKE) is disordered. One can recognise a bHLH domain in the interval 151-201 (QATDSHSLAERVRRGKINERLRCLQDMVPGCYKAMGMATMLDEIINYVQSL).

The protein localises to the nucleus. Its function is as follows. Positive regulator of brassinosteroid signaling. The chain is Transcription factor BEE 1 (BEE1) from Arabidopsis thaliana (Mouse-ear cress).